A 494-amino-acid chain; its full sequence is Protein translocase subunit SecD (494 aa).

Transmembrane regions (helical) follow at residues 7–27, 322–342, 345–365, 372–392, 420–440, and 441–461; these read WFAL…NLPF, LIAA…FYRL, FIAI…YALI, PGVA…VLIF, IIDG…LGTG, and FVKG…FTAL.

The protein belongs to the SecD/SecF family. SecD subfamily. As to quaternary structure, forms a complex with SecF. Part of the essential Sec protein translocation apparatus which comprises SecA, SecYEG and auxiliary proteins SecDF. Other proteins may also be involved.

It localises to the cell inner membrane. Part of the Sec protein translocase complex. Interacts with the SecYEG preprotein conducting channel. SecDF uses the proton motive force (PMF) to complete protein translocation after the ATP-dependent function of SecA. Functionally, probably participates in protein translocation into and across both the cytoplasmic and thylakoid membranes in cyanobacterial cells. The sequence is that of Protein translocase subunit SecD from Prochlorococcus marinus (strain SARG / CCMP1375 / SS120).